We begin with the raw amino-acid sequence, 243 residues long: Sec-independent protein translocase protein TatC (243 aa).

A run of 7 helical transmembrane segments spans residues 18 to 38 (VIII…NYVD), 70 to 90 (IAII…IWSF), 106 to 126 (MIPV…FTVF), 132 to 152 (FLLQ…KYIS), 153 to 173 (FALN…VVYI), 191 to 211 (YALL…DVIS), and 213 to 233 (LLMA…AKFI).

This sequence belongs to the TatC family. In terms of assembly, forms a complex with TatA.

It is found in the cell membrane. Part of the twin-arginine translocation (Tat) system that transports large folded proteins containing a characteristic twin-arginine motif in their signal peptide across membranes. This is Sec-independent protein translocase protein TatC from Carboxydothermus hydrogenoformans (strain ATCC BAA-161 / DSM 6008 / Z-2901).